Consider the following 287-residue polypeptide: UTP--glucose-1-phosphate uridylyltransferase 1 (287 aa).

This sequence belongs to the UDPGP type 2 family.

The catalysed reaction is alpha-D-glucose 1-phosphate + UTP + H(+) = UDP-alpha-D-glucose + diphosphate. It functions in the pathway glycolipid metabolism; diglucosyl-diacylglycerol biosynthesis. Functionally, catalyzes the formation of UDP-glucose from glucose-1-phosphate and UTP. This is an intermediate step in the biosynthesis of diglucosyl-diacylglycerol (Glc2-DAG), i.e. a glycolipid found in the membrane, which is also used as a membrane anchor for lipoteichoic acid (LTA). This Staphylococcus saprophyticus subsp. saprophyticus (strain ATCC 15305 / DSM 20229 / NCIMB 8711 / NCTC 7292 / S-41) protein is UTP--glucose-1-phosphate uridylyltransferase 1 (gtaB1).